The sequence spans 121 residues: Replication protein A 14 kDa subunit (121 aa).

Glycyl lysine isopeptide (Lys-Gly) (interchain with G-Cter in ubiquitin) cross-links involve residues Lys39 and Lys88.

This sequence belongs to the replication factor A protein 3 family. Component of the canonical replication protein A complex (RPA), a heterotrimer composed of RPA1, RPA2 and RPA3. Also a component of the aRPA, the alternative replication protein A complex, a trimeric complex similar to the replication protein A complex/RPA but where RPA1 and RPA3 are associated with RPA4 instead of RPA2. Post-translationally, ubiquitinated by RFWD3 at stalled replication forks in response to DNA damage: ubiquitination by RFWD3 does not lead to degradation by the proteasome and promotes removal of the RPA complex from stalled replication forks, promoting homologous recombination.

It localises to the nucleus. Functionally, as part of the heterotrimeric replication protein A complex (RPA/RP-A), binds and stabilizes single-stranded DNA intermediates, that form during DNA replication or upon DNA stress. It prevents their reannealing and in parallel, recruits and activates different proteins and complexes involved in DNA metabolism. Thereby, it plays an essential role both in DNA replication and the cellular response to DNA damage. In the cellular response to DNA damage, the RPA complex controls DNA repair and DNA damage checkpoint activation. Through recruitment of ATRIP activates the ATR kinase a master regulator of the DNA damage response. It is required for the recruitment of the DNA double-strand break repair factors RAD51 and RAD52 to chromatin, in response to DNA damage. Also recruits to sites of DNA damage proteins like XPA and XPG that are involved in nucleotide excision repair and is required for this mechanism of DNA repair. Also plays a role in base excision repair (BER), probably through interaction with UNG. Also recruits SMARCAL1/HARP, which is involved in replication fork restart, to sites of DNA damage. May also play a role in telomere maintenance. RPA3 has its own single-stranded DNA-binding activity and may be responsible for polarity of the binding of the complex to DNA. This chain is Replication protein A 14 kDa subunit (Rpa3), found in Mus musculus (Mouse).